The chain runs to 132 residues: Iron-sulfur cluster assembly 1 homolog, mitochondrial (132 aa).

The N-terminal 15 residues, 1–15, are a transit peptide targeting the mitochondrion; sequence MASSASSVVRATVRA. 3 residues coordinate Fe cation: cysteine 60, cysteine 124, and cysteine 126.

It belongs to the HesB/IscA family. As to quaternary structure, homooligomer, forming a rod-shaped structure 24 nm in length that may arise through a double-helical assembly of subunits. Interacts with CRY4; CRY4 seems to be associated with the outside of the rod-shaped homooligomer. Does not interact with CRY1 or CRY2. As to expression, detected in retina, especially in the retinal ganglion layer, the inner nuclear layer and the outer nuclear layer. Detected in retina visual pigment cells (at protein level).

Its subcellular location is the mitochondrion. Its function is as follows. Involved in the maturation of mitochondrial 4Fe-4S proteins functioning late in the iron-sulfur cluster assembly pathway. Probably involved in the binding of an intermediate of Fe/S cluster assembly. Component of a putative magnetoreceptor complex formed by ISCA1 and CRY4, a member of the cryptochrome family that are known to be required for light-dependent magnetosensitivity in various orgnisms. The rod-like assembly may facilitate the perception of the Earth's weak magnetic field. Both ISCA1 and the complex with CRY4 have magnetic properties and are attracted to iron beads. When exposed to a magnetic field of 1 mT (superior to the natural magnetic field), over 50% of the rod-like complexes align more or less in parallel with the magnetic field at room temperature. This is Iron-sulfur cluster assembly 1 homolog, mitochondrial (ISCA1) from Columba livia (Rock dove).